The primary structure comprises 876 residues: Serrate RNA effector molecule homolog (876 aa).

Residues 1 to 90 (MGDSDDEYDR…RRDWDEHSSD (90 aa)) form a disordered region. G2 is subject to N-acetylglycine. S4 is subject to Phosphoserine. Residue Y8 is modified to Phosphotyrosine. The segment covering 8-73 (YDRRRRDKFR…ERFSPPRHEL (66 aa)) has biased composition (basic and acidic residues). Phosphoserine is present on residues S67, S74, and S136. K150 participates in a covalent cross-link: Glycyl lysine isopeptide (Lys-Gly) (interchain with G-Cter in SUMO2). Residues 271–412 (EEEEEQAGKP…KPKDAAGLEC (142 aa)) form a disordered region. A compositionally biased stretch (basic and acidic residues) spans 297–347 (DGERKTNDKDEKKEDGKQAENDSSNDDKTKKSEGDGDKEEKKEDSEKEAKK). The segment covering 370-387 (SESESESGQAEEEKEEAE) has biased composition (acidic residues). Residues 388 to 412 (EALKEKEKPKEEEWEKPKDAAGLEC) are compositionally biased toward basic and acidic residues. S493 and S540 each carry phosphoserine. T544 is subject to Phosphothreonine. S570 is modified (phosphoserine). Residues 575 to 598 (ELLGSSGGAPPEEPPKEGNPAEIN) form a disordered region. T671 is modified (phosphothreonine). S679 carries the phosphoserine modification. Residues R833, R840, and R850 each carry the omega-N-methylarginine modification. The interval 835-854 (NYDAFRGQGGYPGKPRNRMV) is disordered.

The protein belongs to the ARS2 family. As to quaternary structure, interacts with NCBP1 and DROSHA. Interacts with CASP8AP2 and ERBB4. Interacts with LUZP4. Interacts with NCBP2/CBP20 and NCBP3. Interacts with MTREX. In terms of tissue distribution, ubiquitously expressed.

Its subcellular location is the nucleus. The protein localises to the nucleoplasm. It localises to the cytoplasm. Functionally, acts as a mediator between the cap-binding complex (CBC) and the primary microRNAs (miRNAs) processing machinery during cell proliferation. Contributes to the stability and delivery of capped primary miRNA transcripts to the primary miRNA processing complex containing DGCR8 and DROSHA, thereby playing a role in RNA-mediated gene silencing (RNAi) by miRNAs. Binds capped RNAs (m7GpppG-capped RNA); however interaction is probably mediated via its interaction with NCBP1/CBP80 component of the CBC complex. Involved in cell cycle progression at S phase. Does not directly confer arsenite resistance but rather modulates arsenic sensitivity. Independently of its activity on miRNAs, necessary and sufficient to promote neural stem cell self-renewal. Does so by directly binding SOX2 promoter and positively regulating its transcription. This Homo sapiens (Human) protein is Serrate RNA effector molecule homolog (SRRT).